We begin with the raw amino-acid sequence, 259 residues long: MTDTSLQSNTALENETTHFGFTTVAKEEKVTKVAEVFHSVAAKYDIMNDLMSGGIHRLWKRFTIDCSGARPGQRILDLGGGTGDLTAKFSRIVGDQGHVVLADINNSMLNVGRDKLRDNGIVGNVHYVQANAEELPFPDDYFDVITISFCLRNVTDKDKALRSMFRVLKPGGRLLVLEFSKPVLEPLSKVYDAYSFHLLPKMGELVANDAESYRYLAESIRMHPDQETLEGMMQDAGFENTKYYNLTGGIVALHRGYKF.

Residues Thr-82, Asp-103, 131 to 132 (NA), and Ser-148 contribute to the S-adenosyl-L-methionine site.

It belongs to the class I-like SAM-binding methyltransferase superfamily. MenG/UbiE family.

The enzyme catalyses a 2-demethylmenaquinol + S-adenosyl-L-methionine = a menaquinol + S-adenosyl-L-homocysteine + H(+). The catalysed reaction is a 2-methoxy-6-(all-trans-polyprenyl)benzene-1,4-diol + S-adenosyl-L-methionine = a 5-methoxy-2-methyl-3-(all-trans-polyprenyl)benzene-1,4-diol + S-adenosyl-L-homocysteine + H(+). It functions in the pathway quinol/quinone metabolism; menaquinone biosynthesis; menaquinol from 1,4-dihydroxy-2-naphthoate: step 2/2. Its pathway is cofactor biosynthesis; ubiquinone biosynthesis. Functionally, methyltransferase required for the conversion of demethylmenaquinol (DMKH2) to menaquinol (MKH2) and the conversion of 2-polyprenyl-6-methoxy-1,4-benzoquinol (DDMQH2) to 2-polyprenyl-3-methyl-6-methoxy-1,4-benzoquinol (DMQH2). This Vibrio parahaemolyticus serotype O3:K6 (strain RIMD 2210633) protein is Ubiquinone/menaquinone biosynthesis C-methyltransferase UbiE.